The sequence spans 119 residues: MKDSNKRFDYRVKRVRSKINGTHDKPRLSVYRGHKHIYAQIIDDSRGVTLASASTLSPELKGKLEINDTVEAAKSVGGLIAKKAVEKGVKKVVFDRRGYEYTGKIKALADTARESGLEF.

The protein belongs to the universal ribosomal protein uL18 family. As to quaternary structure, part of the 50S ribosomal subunit; part of the 5S rRNA/L5/L18/L25 subcomplex. Contacts the 5S and 23S rRNAs.

This is one of the proteins that bind and probably mediate the attachment of the 5S RNA into the large ribosomal subunit, where it forms part of the central protuberance. The polypeptide is Large ribosomal subunit protein uL18 (Endomicrobium trichonymphae).